A 120-amino-acid chain; its full sequence is Spermidine export protein MdtJ (120 aa).

Helical transmembrane passes span Met-1–Met-21, Thr-31–Val-51, Ile-54–Phe-74, and Glu-81–Ile-101.

The protein belongs to the drug/metabolite transporter (DMT) superfamily. Small multidrug resistance (SMR) (TC 2.A.7.1) family. MdtJ subfamily. Forms a complex with MdtI.

The protein localises to the cell inner membrane. Catalyzes the excretion of spermidine. This is Spermidine export protein MdtJ from Enterobacter sp. (strain 638).